The primary structure comprises 559 residues: Potassium-transporting ATPase potassium-binding subunit (559 aa).

12 consecutive transmembrane segments (helical) span residues 7–27, 63–83, 132–152, 170–190, 253–273, 283–303, 327–347, 356–376, 379–399, 416–436, 484–504, and 524–544; these read LLIA…GSGL, LLAL…LLFW, GLTV…FALI, LVRI…LFFI, MVQM…FGEA, LLWA…WAEV, FGVL…CGAV, ALGG…FGGV, GLYG…LMIG, MTAL…ALAM, LLAF…MAIA, and GALF…LTFI.

Belongs to the KdpA family. The system is composed of three essential subunits: KdpA, KdpB and KdpC.

The protein resides in the cell inner membrane. Its function is as follows. Part of the high-affinity ATP-driven potassium transport (or Kdp) system, which catalyzes the hydrolysis of ATP coupled with the electrogenic transport of potassium into the cytoplasm. This subunit binds the periplasmic potassium ions and delivers the ions to the membrane domain of KdpB through an intramembrane tunnel. This is Potassium-transporting ATPase potassium-binding subunit from Salmonella arizonae (strain ATCC BAA-731 / CDC346-86 / RSK2980).